A 516-amino-acid polypeptide reads, in one-letter code: Flavonoid-6-hydroxylase (516 aa).

The helical transmembrane segment at 3-23 (FNAAVCAALAFISLLSYYLIW) threads the bilayer. Residue Cys-455 participates in heme binding.

The protein belongs to the cytochrome P450 family. It depends on heme as a cofactor.

It is found in the membrane. It carries out the reaction genkwanin + reduced [NADPH--hemoprotein reductase] + O2 = scutellarein 7-methyl ether + oxidized [NADPH--hemoprotein reductase] + H2O. The enzyme catalyses (2S)-sakuranetin + reduced [NADPH--hemoprotein reductase] + O2 = (2S)-7-methylcarthamidin + oxidized [NADPH--hemoprotein reductase] + H2O + H(+). It catalyses the reaction apigenin 4',7-dimethyl ether + reduced [NADPH--hemoprotein reductase] + O2 = ladanein + oxidized [NADPH--hemoprotein reductase] + H2O + H(+). The catalysed reaction is (2S)-naringenin 4',7-dimethyl ether + reduced [NADPH--hemoprotein reductase] + O2 = (2S)-carthamidin-4',7-dimethyl ether + oxidized [NADPH--hemoprotein reductase] + H2O + H(+). It participates in flavonoid metabolism. Functionally, 6-OH hydroxylase involved in the biosynthesis of polymethoxylated flavonoids natural products such as pebrellin, aroma compounds which contribute to the flavor of peppermint, and exhibit pharmacological activities such as anti-allergic, anti-oxidant, antibacterial, anti-proliferative, and anti-inflammatory effects. Catalyzes the 6-hydroxylation of 7-O-methylated precursors such as the conversion of genkwanin (GENK) to scutellarein-7-methyl ether (SCU7Me). Can also use apigenin-7,4'-dimethyl ether (AdM), naringenin-7-methyl ether (SAK) and naringenin-7,4'-dimethyl ether (NdM) as substrates. In Mentha piperita (Peppermint), this protein is Flavonoid-6-hydroxylase.